We begin with the raw amino-acid sequence, 480 residues long: ATP synthase subunit beta, chloroplastic (480 aa).

161-168 (GGAGVGKT) contacts ATP.

It belongs to the ATPase alpha/beta chains family. F-type ATPases have 2 components, CF(1) - the catalytic core - and CF(0) - the membrane proton channel. CF(1) has five subunits: alpha(3), beta(3), gamma(1), delta(1), epsilon(1). CF(0) has four main subunits: a(1), b(1), b'(1) and c(9-12).

The protein localises to the plastid. Its subcellular location is the chloroplast thylakoid membrane. It catalyses the reaction ATP + H2O + 4 H(+)(in) = ADP + phosphate + 5 H(+)(out). Its function is as follows. Produces ATP from ADP in the presence of a proton gradient across the membrane. The catalytic sites are hosted primarily by the beta subunits. This chain is ATP synthase subunit beta, chloroplastic, found in Euglena gracilis.